The primary structure comprises 175 residues: NADH dehydrogenase [ubiquinone] 1 alpha subcomplex assembly factor 4 (175 aa).

A lipid anchor (N-myristoyl glycine) is attached at glycine 2. A Phosphoserine modification is found at serine 35.

The protein belongs to the NDUFAF4 family. In terms of assembly, binds calmodulin. Interacts with NDUFAF3. As to quaternary structure, (Microbial infection) Interacts with the vesicular stomatitis virus matrix protein/M; the interaction inhibits viral propagation. In terms of processing, phosphorylated on serine. Prolactin stimulate serine phosphorylation.

The protein localises to the mitochondrion. It is found in the membrane. Its function is as follows. Involved in the assembly of mitochondrial NADH:ubiquinone oxidoreductase complex (complex I). May be involved in cell proliferation and survival of hormone-dependent tumor cells. May be a regulator of breast tumor cell invasion. This chain is NADH dehydrogenase [ubiquinone] 1 alpha subcomplex assembly factor 4, found in Homo sapiens (Human).